The primary structure comprises 91 residues: Early E3B 10.4 kDa protein (91 aa).

Residues 1–22 (MIPRVLILLTLVALFCACSTLA) form the signal peptide. Residues 23 to 34 (AVAHIEVDCIPP) lie on the Lumenal side of the membrane. The helical transmembrane segment at 35–60 (FTVYLLYGFVTLILICSLVTVVIAFI) threads the bilayer. Over 61-91 (QFIDWICVRIAYLRHHPQYRDRTIADLLRIL) the chain is Cytoplasmic.

This sequence belongs to the adenoviridae E3B family.

It is found in the host endoplasmic reticulum membrane. In terms of biological role, down-regulates the EGF receptor. This chain is Early E3B 10.4 kDa protein, found in Homo sapiens (Human).